A 184-amino-acid chain; its full sequence is ATP synthase subunit delta (184 aa).

It belongs to the ATPase delta chain family. F-type ATPases have 2 components, F(1) - the catalytic core - and F(0) - the membrane proton channel. F(1) has five subunits: alpha(3), beta(3), gamma(1), delta(1), epsilon(1). F(0) has three main subunits: a(1), b(2) and c(10-14). The alpha and beta chains form an alternating ring which encloses part of the gamma chain. F(1) is attached to F(0) by a central stalk formed by the gamma and epsilon chains, while a peripheral stalk is formed by the delta and b chains.

It is found in the cell inner membrane. Its function is as follows. F(1)F(0) ATP synthase produces ATP from ADP in the presence of a proton or sodium gradient. F-type ATPases consist of two structural domains, F(1) containing the extramembraneous catalytic core and F(0) containing the membrane proton channel, linked together by a central stalk and a peripheral stalk. During catalysis, ATP synthesis in the catalytic domain of F(1) is coupled via a rotary mechanism of the central stalk subunits to proton translocation. This protein is part of the stalk that links CF(0) to CF(1). It either transmits conformational changes from CF(0) to CF(1) or is implicated in proton conduction. The polypeptide is ATP synthase subunit delta (Rhizorhabdus wittichii (strain DSM 6014 / CCUG 31198 / JCM 15750 / NBRC 105917 / EY 4224 / RW1) (Sphingomonas wittichii)).